Reading from the N-terminus, the 420-residue chain is uncharacterized protein (420 aa).

This sequence belongs to the mimivirus R160 family.

The protein localises to the virion. This is an uncharacterized protein from Acanthamoeba polyphaga mimivirus (APMV).